A 1622-amino-acid polypeptide reads, in one-letter code: Transient receptor potential cation channel subfamily M member 1 (1622 aa).

Disordered stretches follow at residues 1-25 (MGSM…GSQK), 64-95 (PPLP…KHTQ), 450-490 (LAPP…EVEE), 618-641 (LGME…EEEI), and 822-856 (SKEN…HKKQ). The Cytoplasmic segment spans residues 1–875 (MGSMRKMSSS…CEFYNAPIVK (875 aa)). Low complexity predominate over residues 8 to 25 (SSSFKRGSIKSSTSGSQK). Over residues 70 to 95 (APSTTGEDTKQADTQSGKWSVSKHTQ) the composition is skewed to polar residues. The span at 472–483 (GRGKGKGKKKGK) shows a compositional bias: basic residues. Basic and acidic residues-rich tracts occupy residues 823-832 (KENEDGKEKE) and 843-853 (GSRKGDEENEH). A helical membrane pass occupies residues 876-896 (FWFYTISYLGYLLLFNYVILV). Topologically, residues 897–942 (RMDGWPSPQEWIVISYIVSLALEKIREILMSEPGKLSQKIKVWLQE) are extracellular. Residues 943-963 (YWNITDLVAISMFMVGAILRL) traverse the membrane as a helical segment. The Cytoplasmic segment spans residues 964-973 (QSQPYMGYGR). The chain crosses the membrane as a helical span at residues 974–994 (VIYCVDIILWYIRVLDIFGVN). The Extracellular segment spans residues 995–1006 (KYLGPYVMMIGK). Residues 1007-1027 (MMIDMLYFVVIMLVVLMSFGV) form a helical membrane-spanning segment. Residues 1028 to 1099 (ARQAILHPEE…CIPGAWLTPA (72 aa)) lie on the Cytoplasmic side of the membrane. Residues 1100–1120 (LMACYLLVANILLVNLLIAVF) form a helical membrane-spanning segment. N-linked (GlcNAc...) asparagine glycosylation is present at N1121. The Extracellular portion of the chain corresponds to 1121–1150 (NNTFFEVKSISNQVWKFQRYQLIMTFHDRP). A helical membrane pass occupies residues 1151 to 1171 (VLPPPMIILSHIYIIIMRLSG). Over 1172–1622 (RCRKKREGDQ…QEKRSAETEC (451 aa)) the chain is Cytoplasmic. The stretch at 1224 to 1252 (DERIRVTSERVENMSMRLEEINERENFMK) forms a coiled coil. Disordered regions lie at residues 1354-1383 (EDAK…RSRL), 1389-1408 (LSTE…EFDP), and 1567-1622 (CLRS…ETEC). The segment covering 1613-1622 (QEKRSAETEC) has biased composition (basic and acidic residues).

It belongs to the transient receptor (TC 1.A.4) family. LTrpC subfamily. TRPM1 sub-subfamily. Homodimer. Interacts with TRPM3; the interaction results in the formation of a heteromultimeric cation channel complex that are functionally different from the homomeric channels. Interacts with GPR179. Associates with both guanine nucleotide-binding proteins G(o) and beta-gamma G protein dimer; implicated in directly regulating TRPM1 channel open-state. Expressed in the retina where it localizes on dendritic tips of ON bipolar cells. Specifically, it is expressed in retinal bipolar cells (BPCs) of the ON subtype. Not detected in brain, lung, liver, heart, kidney, spleen or small intestine. Also expressed at high levels in poorly metastatic variants of B16 melanoma and at much reduced levels in highly metastatic variants of B16 melanoma.

The protein resides in the cell membrane. It is found in the endoplasmic reticulum membrane. Its subcellular location is the cell projection. The protein localises to the axon. The enzyme catalyses Ca(2+)(in) = Ca(2+)(out). The catalysed reaction is Mg(2+)(in) = Mg(2+)(out). It catalyses the reaction Mn(2+)(in) = Mn(2+)(out). It carries out the reaction Ni(2+)(in) = Ni(2+)(out). With respect to regulation, inhibited by extracellular zinc ions. Inhibited by intracellular Mg(2+). Activated by the neuroactive steroid pregnenolone sulfate. Negatively regulated by activation of GRM6 receptors in the ON-bipolar cells. Its function is as follows. Constitutively open nonselective divalent cation-conducting channels which mediate the influx of Ca(2+), Mg(2+), Mn(2+), Ba(2+), and Ni(2+) into the cytoplasm, leading to membrane depolarization. Impermeable to zinc ions. In addition, forms heteromultimeric ion channels with TRPM3 which are permeable for calcium and zinc ions. Plays an essential role for the depolarizing photoresponse of retinal ON bipolar cells. In the dark, tonic release of glutamate activates the G-protein coupled receptor for glutamate (GRM6), its activation induces the release of G(o) and the beta-gamma G protein dimer. Both subunits can interact and inactivate the TRPM1 channel. A light onset, induces decrease in glutamate release and deactivation of GRM6 leading to channel opening and membrane depolarization. May play a role in metastasis suppression. This Mus musculus (Mouse) protein is Transient receptor potential cation channel subfamily M member 1.